A 539-amino-acid chain; its full sequence is Phosphoenolpyruvate carboxykinase (ATP) (539 aa).

Substrate contacts are provided by Arg-64, Tyr-206, and Lys-212. Residues Lys-212, His-231, and 247-255 each bind ATP; that span reads GLSGTGKTT. Positions 212 and 231 each coordinate Mn(2+). Asp-268 is a Mn(2+) binding site. ATP is bound by residues Glu-296, Arg-332, 448 to 449, and Thr-454; that span reads RI. Substrate is bound at residue Arg-332.

Belongs to the phosphoenolpyruvate carboxykinase (ATP) family. As to quaternary structure, monomer. It depends on Mn(2+) as a cofactor.

It is found in the cytoplasm. It catalyses the reaction oxaloacetate + ATP = phosphoenolpyruvate + ADP + CO2. Its pathway is carbohydrate biosynthesis; gluconeogenesis. In terms of biological role, involved in the gluconeogenesis. Catalyzes the conversion of oxaloacetate (OAA) to phosphoenolpyruvate (PEP) through direct phosphoryl transfer between the nucleoside triphosphate and OAA. This is Phosphoenolpyruvate carboxykinase (ATP) from Yersinia pseudotuberculosis serotype O:1b (strain IP 31758).